The chain runs to 371 residues: Putative glutamate--cysteine ligase 2 (371 aa).

This sequence belongs to the glutamate--cysteine ligase type 2 family. YbdK subfamily.

It carries out the reaction L-cysteine + L-glutamate + ATP = gamma-L-glutamyl-L-cysteine + ADP + phosphate + H(+). Its function is as follows. ATP-dependent carboxylate-amine ligase which exhibits weak glutamate--cysteine ligase activity. In Cupriavidus taiwanensis (strain DSM 17343 / BCRC 17206 / CCUG 44338 / CIP 107171 / LMG 19424 / R1) (Ralstonia taiwanensis (strain LMG 19424)), this protein is Putative glutamate--cysteine ligase 2.